The primary structure comprises 764 residues: Zinc finger CCCH domain-containing protein 24 (764 aa).

ANK repeat units follow at residues 108–138 and 143–175; these read EHRT…DVNR and DGTT…DADA. The C3H1-type zinc finger occupies 321-348; it reads HYSCVPCPDFRKGVCRRGDMCEYAHGVF. Disordered regions lie at residues 616–665 and 698–732; these read QREK…DWGV and KESP…EGPS. Over residues 640–659 the composition is skewed to low complexity; sequence SGVVGSPLSSSWSKWGSPSG. Polar residues predominate over residues 705–716; it reads QVTTAESINSVG.

In Oryza sativa subsp. japonica (Rice), this protein is Zinc finger CCCH domain-containing protein 24.